A 94-amino-acid chain; its full sequence is Defensin alpha 5 (94 aa).

An N-terminal signal peptide occupies residues 1 to 19; it reads MRTIAILAAILLVALQAQA. 3 disulfide bridges follow: Cys65/Cys93, Cys67/Cys82, and Cys72/Cys92.

It belongs to the alpha-defensin family. In terms of assembly, homodimer. Homotetramer. Interacts with B.antracis lef/lethal factor. In terms of processing, glycosylated. Post-translationally, proteolytically cleaved at Arg-62 by trypsin. Both the propeptide form proHD5/HD5(20-94) and HD5(56-94) are cleaved into the lumenal peptide form HD5(63-94) by trypsin. Unprocessed proHD5 exerts antimicrobial activities, but peptide potency is enhanced by peptide processing. Proteolytically cleaved in duodenal fluid; derived fragments are antimicrobially active against commensal bacteria (in vitro). (Microbial infection) The disulfide bridges and homodimerization are a prerequisite for the enhancement of S.flexneri adhesion and invasion. Expressed in the gastrointestinal, reproductive, and urinary tracts (at protein level). Expressed in Paneth cells of the small intestine (at protein level). Expressed throughout the urothelium of the lower urinary tract and in the collecting tubules of the kidney (at protein level). Expressed in stratified squamous epithelial cells of the female genital tract epithelia, such as in vagina, ectocervix, endocervix, endometrium, and fallopian tube (at protein level). Endometrial expression correlates with stages of the menstrual cycle: Expression is low during the early proliferative phase, increased during the mid- to late proliferative phase, peaks during the early secretory phase of the cycle, and decreases during the mid- to late secretory phase.

The protein resides in the secreted. It is found in the cytoplasmic vesicle. The protein localises to the secretory vesicle. Its function is as follows. Host-defense peptide that maintains sterility in the urogenital system. Has antimicrobial activity against a wide range of bacteria, including Gram-negative E.coli, P.aeruginosa and S.typhimurium, and Gram-positive E.aerogenes, S.aureus, B.cereus, E.faecium and L.monocytogenes. Confers resistance to intestinal infection by S.typhimurium. Exhibits antimicrobial activity against enteric commensal bacteria such as B.adolescentis, L.acidophilus, B.breve, L.fermentum, B.longum and S.thermophilus. Binds to bacterial membranes and causes membrane disintegration. Induces the secretion of the chemokine IL-8 by intestinal epithelial cells. Binds to B.antracis lef/lethal factor, a major virulence factor from B.anthracis, and neutralizes its enzymatic activity. Functionally, (Microbial infection) Acts as a target for S.flexneri infection by binding to the bacterium, possibly via bacterial surface proteins, and thereby augmenting infectivity via enhanced bacterial adhesion and invasion of epithelial cells and tissues. This is Defensin alpha 5 (DEFA5) from Homo sapiens (Human).